The chain runs to 130 residues: Small ribosomal subunit protein uS11c (130 aa).

The protein belongs to the universal ribosomal protein uS11 family. In terms of assembly, part of the 30S ribosomal subunit.

The protein resides in the plastid. The protein localises to the chloroplast. The chain is Small ribosomal subunit protein uS11c from Chlorokybus atmophyticus (Soil alga).